We begin with the raw amino-acid sequence, 463 residues long: Chromosomal replication initiator protein DnaA (463 aa).

The interval 1–83 (MSLTLWQQCL…LRFEVGSKPV (83 aa)) is domain I, interacts with DnaA modulators. Positions 83-126 (VAQAISQPVMVSAHASAPGVVSRPAPTRPSWDNVPALAELSYRS) are domain II. Residues 127-343 (NVNTKHNFDN…GALNRVIANA (217 aa)) are domain III, AAA+ region. The ATP site is built by Gly-171, Gly-173, Lys-174, and Thr-175. The interval 344–463 (NFTGRAITID…FSNLIRTLSS (120 aa)) is domain IV, binds dsDNA.

Belongs to the DnaA family. As to quaternary structure, oligomerizes as a right-handed, spiral filament on DNA at oriC.

Its subcellular location is the cytoplasm. In terms of biological role, plays an essential role in the initiation and regulation of chromosomal replication. ATP-DnaA binds to the origin of replication (oriC) to initiate formation of the DNA replication initiation complex once per cell cycle. Binds the DnaA box (a 9 base pair repeat at the origin) and separates the double-stranded (ds)DNA. Forms a right-handed helical filament on oriC DNA; dsDNA binds to the exterior of the filament while single-stranded (ss)DNA is stabiized in the filament's interior. The ATP-DnaA-oriC complex binds and stabilizes one strand of the AT-rich DNA unwinding element (DUE), permitting loading of DNA polymerase. After initiation quickly degrades to an ADP-DnaA complex that is not apt for DNA replication. Binds acidic phospholipids. The sequence is that of Chromosomal replication initiator protein DnaA from Erwinia tasmaniensis (strain DSM 17950 / CFBP 7177 / CIP 109463 / NCPPB 4357 / Et1/99).